Here is a 651-residue protein sequence, read N- to C-terminus: Apical membrane antigen 1-like protein (651 aa).

A signal peptide spans 1-41; it reads MPTESRSILARAEETRCRHLSRLLRAGLVFLLCDVLTSCLA. Residues 42-81 constitute a propeptide, removed in mature form; it reads TPELQNTVIRSSKAHHLQLLFSSRSTPAVKFPLDATLSAP. Residues 42–570 are Extracellular-facing; it reads TPELQNTVIR…VEKEGSGGNT (529 aa). 7 disulfide bridges follow: Cys-141/Cys-309, Cys-215/Cys-248, Cys-264/Cys-277, Cys-327/Cys-417, Cys-347/Cys-408, Cys-441/Cys-463, and Cys-453/Cys-475. N-linked (GlcNAc...) asparagine glycosylation is present at Asn-230. One copy of the 1; approximate repeat lies at 483–486; it reads PPVK. The segment at 483–531 is 12 x 4 AA approximate tandem-repeats of P-P-V-E; sequence PPVKPPVEPPVEPPVEPPVEPPVEPPVEPPVEPPVEPPVEPPVVEPPTE. Residues 483–547 are compositionally biased toward pro residues; it reads PPVKPPVEPP…EPPVVLPPTP (65 aa). Residues 483–567 are disordered; the sequence is PPVKPPVEPP…DETVEKEGSG (85 aa). 9 tandem repeats follow at residues 487–490, 491–494, 495–498, 499–502, 503–506, 507–510, 511–514, 515–518, and 519–522. Residues 523 to 527 form an 11; approximate repeat; the sequence is PPVVE. One copy of the 12; approximate repeat lies at 528-531; sequence PPTE. A helical transmembrane segment spans residues 571–591; the sequence is ALIAGSVLGMLIILALVGTCV. Residues 592–651 lie on the Cytoplasmic side of the membrane; the sequence is GFYYRKRPLPPTERPTVEASGGREVEGPSDVAVPPDHSWWGEGEHETESLLGSRAVDAEF. The interval 598–651 is disordered; the sequence is RPLPPTERPTVEASGGREVEGPSDVAVPPDHSWWGEGEHETESLLGSRAVDAEF.

It belongs to the apicomplexan parasites AMA1 family. In terms of processing, proteolytically cleaved within its transmembrane domain, releasing a soluble form from the cell surface.

It localises to the cell membrane. The protein resides in the secreted. Its function is as follows. May play a role in host cell invasion. The polypeptide is Apical membrane antigen 1-like protein (Toxoplasma gondii (strain ATCC 50861 / VEG)).